The sequence spans 158 residues: MRWLPFIAIFLYVYIEISIFIQVAHVLGVLLTLVLVIFTSVIGMSLVRNQGFKNFVLMQQKMAAGENPAAEMIKSVSLIIAGLLLLLPGFFTDFLGLLLLLPPVQKHLTVKLMPHLRFSRMPGGGFSAGTGGGNTFDGEYQRKDDERDRLDHKDDRQD.

Topologically, residues 1 to 16 (MRWLPFIAIFLYVYIE) are cytoplasmic. Residues 17 to 37 (ISIFIQVAHVLGVLLTLVLVI) traverse the membrane as a helical segment. At 38–78 (FTSVIGMSLVRNQGFKNFVLMQQKMAAGENPAAEMIKSVSL) the chain is on the periplasmic side. Residues 79–99 (IIAGLLLLLPGFFTDFLGLLL) traverse the membrane as a helical segment. Over 100–158 (LLPPVQKHLTVKLMPHLRFSRMPGGGFSAGTGGGNTFDGEYQRKDDERDRLDHKDDRQD) the chain is Cytoplasmic. Residues 125–135 (GFSAGTGGGNT) are compositionally biased toward gly residues. Residues 125 to 158 (GFSAGTGGGNTFDGEYQRKDDERDRLDHKDDRQD) are disordered. Residues 139-158 (EYQRKDDERDRLDHKDDRQD) are compositionally biased toward basic and acidic residues.

The protein belongs to the UPF0716 (FxsA) family.

Its subcellular location is the cell inner membrane. Overexpression alleviates the exclusion of phage T7 in cells harboring the F plasmid. The polypeptide is UPF0716 protein FxsA (fxsA) (Escherichia coli (strain K12)).